We begin with the raw amino-acid sequence, 199 residues long: 3-hexulose-6-phosphate isomerase (199 aa).

The 143-residue stretch at 44 to 186 folds into the SIS domain; sequence LARQIVQPGR…FQSLWDHTEV (143 aa). Substrate-binding positions include Ser62 and 101 to 106; that span reads SGSGTT. Glu166 (proton acceptor) is an active-site residue.

It belongs to the SIS family. PHI subfamily.

The enzyme catalyses D-arabino-hex-3-ulose 6-phosphate = beta-D-fructose 6-phosphate. The protein operates within one-carbon metabolism; formaldehyde assimilation via RuMP pathway; D-fructose 6-phosphate from D-ribulose 5-phosphate and formaldehyde: step 2/2. Its function is as follows. Catalyzes the isomerization between 3-hexulose 6-phosphate and fructose 6-phosphate. This chain is 3-hexulose-6-phosphate isomerase (rmpB), found in Mycobacterium gastri.